Consider the following 568-residue polypeptide: Proline--tRNA ligase (568 aa).

It belongs to the class-II aminoacyl-tRNA synthetase family. ProS type 1 subfamily. In terms of assembly, homodimer.

It localises to the cytoplasm. It carries out the reaction tRNA(Pro) + L-proline + ATP = L-prolyl-tRNA(Pro) + AMP + diphosphate. Functionally, catalyzes the attachment of proline to tRNA(Pro) in a two-step reaction: proline is first activated by ATP to form Pro-AMP and then transferred to the acceptor end of tRNA(Pro). As ProRS can inadvertently accommodate and process non-cognate amino acids such as alanine and cysteine, to avoid such errors it has two additional distinct editing activities against alanine. One activity is designated as 'pretransfer' editing and involves the tRNA(Pro)-independent hydrolysis of activated Ala-AMP. The other activity is designated 'posttransfer' editing and involves deacylation of mischarged Ala-tRNA(Pro). The misacylated Cys-tRNA(Pro) is not edited by ProRS. This is Proline--tRNA ligase from Campylobacter jejuni subsp. jejuni serotype O:6 (strain 81116 / NCTC 11828).